Here is a 368-residue protein sequence, read N- to C-terminus: Isocitrate dehydrogenase [NAD] regulatory subunit 3, mitochondrial (368 aa).

The N-terminal 26 residues, 1–26 (MARRSVSIFNRLLANPPSPFTSLSRS), are a transit peptide targeting the mitochondrion.

The protein belongs to the isocitrate and isopropylmalate dehydrogenases family. In terms of assembly, heterooligomer of catalytic and regulatory subunits. Interacts with 14-3-3-like proteins GRF1 GRF3 and GRF8. Mainly expressed at a low level in pollen.

It localises to the mitochondrion. Its function is as follows. Performs an essential role in the oxidative function of the citric acid cycle. The polypeptide is Isocitrate dehydrogenase [NAD] regulatory subunit 3, mitochondrial (IDH3) (Arabidopsis thaliana (Mouse-ear cress)).